The sequence spans 107 residues: uncharacterized protein (107 aa).

The tract at residues 86–107 (QVSNHEEDADVLETQDDNAEQV) is disordered. The segment covering 92–107 (EDADVLETQDDNAEQV) has biased composition (acidic residues).

This is an uncharacterized protein from Rickettsia prowazekii (strain Madrid E).